Reading from the N-terminus, the 198-residue chain is Protein GrpE (198 aa).

It belongs to the GrpE family. Homodimer.

It is found in the cytoplasm. Participates actively in the response to hyperosmotic and heat shock by preventing the aggregation of stress-denatured proteins, in association with DnaK and GrpE. It is the nucleotide exchange factor for DnaK and may function as a thermosensor. Unfolded proteins bind initially to DnaJ; upon interaction with the DnaJ-bound protein, DnaK hydrolyzes its bound ATP, resulting in the formation of a stable complex. GrpE releases ADP from DnaK; ATP binding to DnaK triggers the release of the substrate protein, thus completing the reaction cycle. Several rounds of ATP-dependent interactions between DnaJ, DnaK and GrpE are required for fully efficient folding. The protein is Protein GrpE of Baumannia cicadellinicola subsp. Homalodisca coagulata.